Here is a 275-residue protein sequence, read N- to C-terminus: Methylglyoxal reductase DkgA (275 aa).

Catalysis depends on Tyr51, which acts as the Proton donor. Position 107 (His107) interacts with substrate. An NADP(+)-binding site is contributed by 187-241 (SPLAQGGKGVFDQKVIRDLADKYGKTPAQIVIRWHLDSGLVVIPKSVTPSRIAEN).

Belongs to the aldo/keto reductase family. Monomer.

The protein localises to the cytoplasm. The enzyme catalyses hydroxyacetone + NADP(+) = methylglyoxal + NADPH + H(+). Aldo-keto reductase that significantly contributes to cellular methylglyoxal detoxification by catalyzing the NADPH-dependent conversion of methylglyoxal to acetol. The chain is Methylglyoxal reductase DkgA from Escherichia coli O157:H7.